Reading from the N-terminus, the 224-residue chain is Ribonuclease 3 (224 aa).

One can recognise an RNase III domain in the interval 4–127; the sequence is IEKLEQSLTY…IIGAIHLEAG (124 aa). Residue Glu-40 participates in Mg(2+) binding. The active site involves Asp-44. 2 residues coordinate Mg(2+): Asp-113 and Glu-116. Glu-116 is a catalytic residue. One can recognise a DRBM domain in the interval 154–223; the sequence is DYKTKLQEIT…AKIALEKLGA (70 aa).

It belongs to the ribonuclease III family. Homodimer. It depends on Mg(2+) as a cofactor.

The protein localises to the cytoplasm. It catalyses the reaction Endonucleolytic cleavage to 5'-phosphomonoester.. Digests double-stranded RNA. Involved in the processing of primary rRNA transcript to yield the immediate precursors to the large and small rRNAs (23S and 16S). Also processes some mRNAs, and tRNAs when they are encoded in the rRNA operon. In terms of biological role, CRISPR (clustered regularly interspaced short palindromic repeat) is an adaptive immune system that provides protection against mobile genetic elements (viruses, transposable elements and conjugative plasmids). CRISPR clusters contain spacers, sequences complementary to antecedent mobile elements, and target invading nucleic acids. CRISPR clusters are transcribed and processed into CRISPR RNA (crRNA). In this organism endogenous ribonuclease 3 and Cas9 are required for correct coprocessing of pre-crRNA and the trans-encoded small RNA (tracrRNA). Cas9, crRNA and tracrRNA are required for cleavage of invading DNA. Complements pre-crRNA and tracrRNA coprocessing defects in an rnc deletion in S.pyogenes strain 370. This chain is Ribonuclease 3, found in Campylobacter jejuni subsp. jejuni serotype O:2 (strain ATCC 700819 / NCTC 11168).